The chain runs to 166 residues: uncharacterized protein (166 aa).

The chain crosses the membrane as a helical span at residues 34 to 54; the sequence is FWGKVLVLTFGIICVVFVIFM. Disordered regions lie at residues 73-93 and 123-166; these read QRTQHSIHRRERSSSGASQQF and TSTP…NDEV.

Its subcellular location is the vacuole membrane. This is an uncharacterized protein from Schizosaccharomyces pombe (strain 972 / ATCC 24843) (Fission yeast).